Here is an 81-residue protein sequence, read N- to C-terminus: Short neurotoxin 1 (81 aa).

The first 21 residues, Met-1 to Thr-21, serve as a signal peptide directing secretion. Disulfide bonds link Cys-24–Cys-43, Cys-38–Cys-60, Cys-62–Cys-73, and Cys-74–Cys-79.

The protein belongs to the three-finger toxin family. Short-chain subfamily. Type I alpha-neurotoxin sub-subfamily. In terms of tissue distribution, expressed by the venom gland.

The protein resides in the secreted. Functionally, binds to muscle nicotinic acetylcholine receptor (nAChR) and inhibit acetylcholine from binding to the receptor, thereby impairing neuromuscular transmission. This Tropidechis carinatus (Australian rough-scaled snake) protein is Short neurotoxin 1.